A 248-amino-acid chain; its full sequence is Glutamine-binding periplasmic protein (248 aa).

The signal sequence occupies residues 1–22 (MKSVLKVSLAALTLAFAVSSHA).

It belongs to the bacterial solute-binding protein 3 family.

Its subcellular location is the periplasm. Involved in a glutamine-transport system GlnHPQ. This chain is Glutamine-binding periplasmic protein (glnH), found in Escherichia coli O157:H7.